The chain runs to 307 residues: MWVRTTITVKRWTEERSGRKIERTERTDITRLPSWKRGYPASVDSSSDLFSFSEGENKETDRRCWKHQHCPGHTIHPFSDCGHHNRCMHAVSQCDCESRCRSHRPVSVAIIYHPTHHMYMTDDDLEENWVSRKNHLSPSARPPDPNTGSATEVPDLSVPITIWRSESPIEKCQESNVIKDIKRKEKEQDEEEMVDEKANLKKKAKGKLTKKKTPVKSESSPADLSQSVRGPVRTPESSPESPGGLESEYSCERGKERPSSEDVVESLSPRKKEKTSSGQAKKNGTKKETQKTSKRKKSSPVPNPNLS.

Disordered stretches follow at residues 134–155 and 183–307; these read NHLS…EVPD and RKEK…PNLS. The segment covering 200-214 has biased composition (basic residues); that stretch reads LKKKAKGKLTKKKTP. Over residues 216-228 the composition is skewed to polar residues; it reads KSESSPADLSQSV. Ser220 carries the phosphoserine modification. Residues 235–248 are compositionally biased toward low complexity; the sequence is PESSPESPGGLESE. Phosphoserine occurs at positions 250, 259, 260, 298, and 307. A compositionally biased stretch (basic and acidic residues) spans 250–260; that stretch reads SCERGKERPSS.

Belongs to the PROCA1 family.

The sequence is that of Protein PROCA1 (Proca1) from Mus musculus (Mouse).